We begin with the raw amino-acid sequence, 497 residues long: Low affinity K(+) transporter 1 (497 aa).

At 1–29 the chain is on the extracellular side; it reads MFNHDWKYSINSKTFADLNIELFRNHKFK. A helical membrane pass occupies residues 30–50; the sequence is TVLNYIIGVVGWNGLKLALFV. The Cytoplasmic portion of the chain corresponds to 51-80; that stretch reads SDIYTCIKLLAFNSWSNNIIKPYLPFKISK. Residues 81–101 form a helical membrane-spanning segment; sequence WLFSGCILASIVLLIWEAIAG. Residues 102–216 are Extracellular-facing; the sequence is MRIYKTGNIS…TNHEEAVILS (115 aa). A helical membrane pass occupies residues 217-237; the sequence is LMLFSFIIWALFVFKFLLAVI. The Cytoplasmic portion of the chain corresponds to 238 to 497; that stretch reads CSIFVYYKII…EDEDRTYNYT (260 aa). Phosphoserine occurs at positions 291 and 319. A disordered region spans residues 420–469; sequence EFHGPLDSMPNTTNNIRNFNSNSSRPRPPPLQTKSSINSKADSNDNGRIY. Over residues 429–444 the composition is skewed to low complexity; sequence PNTTNNIRNFNSNSSR. Positions 451–465 are enriched in polar residues; the sequence is QTKSSINSKADSNDN.

It belongs to the KCH1 low affinity K(+) transporter family.

Its subcellular location is the vacuole membrane. It localises to the cell membrane. The catalysed reaction is K(+)(in) = K(+)(out). Its function is as follows. Low affinity potassium transporter that, with PRM6/KCH2, participates in high-affinity Ca(2+) influx system (HACS) activation during the response to mating pheromone. Directly promotes K(+) influx and HACS may electrochemically respond to this K(+) influx. KCH1 and KCH2 act at the apex of the calcium signaling pathway that is used for survival during prolonged exposures to mating pheromones. The protein is Low affinity K(+) transporter 1 of Saccharomyces cerevisiae (strain ATCC 204508 / S288c) (Baker's yeast).